The chain runs to 242 residues: Platelet-derived growth factor subunit B (242 aa).

The N-terminal stretch at 1-20 (MNRCWALFLSLCCYLRLVSA) is a signal peptide. Positions 21 to 81 (EGDPIPEELY…ELESLSRGRR (61 aa)) are cleaved as a propeptide — removed in mature form. The N-linked (GlcNAc...) asparagine glycan is linked to Asn-63. 3 disulfides stabilise this stretch: Cys-97–Cys-141, Cys-130–Cys-178, and Cys-134–Cys-180. Over residues 219 to 232 (PPKGKHRKFKHTHD) the composition is skewed to basic residues. Residues 219–242 (PPKGKHRKFKHTHDKKALKETLGA) form a disordered region. Residues 233-242 (KKALKETLGA) show a composition bias toward basic and acidic residues.

It belongs to the PDGF/VEGF growth factor family. In terms of assembly, antiparallel homodimer; disulfide-linked. Antiparallel heterodimer with PDGFA; disulfide-linked. The PDGFB homodimer interacts with PDGFRA and PDGFRB homodimers, and with heterodimers formed by PDGFRA and PDGFRB. The heterodimer composed of PDGFA and PDGFB interacts with PDGFRB homodimers, and with heterodimers formed by PDGFRA and PDGFRB. Interacts with XLKD1. Interacts with LRP1. Interacts with SORL1 (via the N-terminal ectodomain). Interacts with CD82; this interaction inhibits PDGFB-mediated signaling pathway.

It is found in the secreted. Functionally, growth factor that plays an essential role in the regulation of embryonic development, cell proliferation, cell migration, survival and chemotaxis. Potent mitogen for cells of mesenchymal origin. Required for normal proliferation and recruitment of pericytes and vascular smooth muscle cells in the central nervous system, skin, lung, heart and placenta. Required for normal blood vessel development, and for normal development of kidney glomeruli. Plays an important role in wound healing. Signaling is modulated by the formation of heterodimers with PDGFA. The polypeptide is Platelet-derived growth factor subunit B (PDGFB) (Canis lupus familiaris (Dog)).